The chain runs to 287 residues: Ribosomal RNA small subunit methyltransferase A (287 aa).

S-adenosyl-L-methionine-binding residues include Asn28, Leu30, Gly55, Glu77, Asp103, and Asn123.

It belongs to the class I-like SAM-binding methyltransferase superfamily. rRNA adenine N(6)-methyltransferase family. RsmA subfamily.

The protein resides in the cytoplasm. It carries out the reaction adenosine(1518)/adenosine(1519) in 16S rRNA + 4 S-adenosyl-L-methionine = N(6)-dimethyladenosine(1518)/N(6)-dimethyladenosine(1519) in 16S rRNA + 4 S-adenosyl-L-homocysteine + 4 H(+). Functionally, specifically dimethylates two adjacent adenosines (A1518 and A1519) in the loop of a conserved hairpin near the 3'-end of 16S rRNA in the 30S particle. May play a critical role in biogenesis of 30S subunits. The protein is Ribosomal RNA small subunit methyltransferase A of Rhodopseudomonas palustris (strain HaA2).